The sequence spans 860 residues: Leucine--tRNA ligase (860 aa).

The 'HIGH' region motif lies at 42–52; the sequence is PYPSGRLHMGH. A 'KMSKS' region motif is present at residues 619–623; sequence KMSKS. Lysine 622 is an ATP binding site.

This sequence belongs to the class-I aminoacyl-tRNA synthetase family.

The protein resides in the cytoplasm. The catalysed reaction is tRNA(Leu) + L-leucine + ATP = L-leucyl-tRNA(Leu) + AMP + diphosphate. The polypeptide is Leucine--tRNA ligase (Shigella dysenteriae serotype 1 (strain Sd197)).